Here is a 92-residue protein sequence, read N- to C-terminus: Large ribosomal subunit protein eL31 (92 aa).

Belongs to the eukaryotic ribosomal protein eL31 family.

The sequence is that of Large ribosomal subunit protein eL31 from Haloquadratum walsbyi (strain DSM 16790 / HBSQ001).